We begin with the raw amino-acid sequence, 426 residues long: Glutamate-1-semialdehyde 2,1-aminomutase (426 aa).

Lys267 is subject to N6-(pyridoxal phosphate)lysine.

The protein belongs to the class-III pyridoxal-phosphate-dependent aminotransferase family. HemL subfamily. In terms of assembly, homodimer. The cofactor is pyridoxal 5'-phosphate.

It localises to the cytoplasm. The catalysed reaction is (S)-4-amino-5-oxopentanoate = 5-aminolevulinate. Its pathway is porphyrin-containing compound metabolism; protoporphyrin-IX biosynthesis; 5-aminolevulinate from L-glutamyl-tRNA(Glu): step 2/2. The protein is Glutamate-1-semialdehyde 2,1-aminomutase of Bdellovibrio bacteriovorus (strain ATCC 15356 / DSM 50701 / NCIMB 9529 / HD100).